Reading from the N-terminus, the 273-residue chain is 4-hydroxy-tetrahydrodipicolinate reductase (273 aa).

NAD(+) is bound at residue 12–17 (GAGGRM). Arg39 contributes to the NADP(+) binding site. Residues 102-104 (GTT) and 126-129 (AANF) contribute to the NAD(+) site. The active-site Proton donor/acceptor is His159. A (S)-2,3,4,5-tetrahydrodipicolinate-binding site is contributed by His160. The active-site Proton donor is Lys163. 169-170 (GT) is a binding site for (S)-2,3,4,5-tetrahydrodipicolinate.

It belongs to the DapB family. As to quaternary structure, homotetramer.

The protein localises to the cytoplasm. The enzyme catalyses (S)-2,3,4,5-tetrahydrodipicolinate + NAD(+) + H2O = (2S,4S)-4-hydroxy-2,3,4,5-tetrahydrodipicolinate + NADH + H(+). It catalyses the reaction (S)-2,3,4,5-tetrahydrodipicolinate + NADP(+) + H2O = (2S,4S)-4-hydroxy-2,3,4,5-tetrahydrodipicolinate + NADPH + H(+). It participates in amino-acid biosynthesis; L-lysine biosynthesis via DAP pathway; (S)-tetrahydrodipicolinate from L-aspartate: step 4/4. Catalyzes the conversion of 4-hydroxy-tetrahydrodipicolinate (HTPA) to tetrahydrodipicolinate. This Sodalis glossinidius (strain morsitans) protein is 4-hydroxy-tetrahydrodipicolinate reductase.